The primary structure comprises 150 residues: Meiotically up-regulated gene 108 protein (150 aa).

Residues 1–11 (MANRFTSSDQT) are compositionally biased toward polar residues. The disordered stretch occupies residues 1 to 150 (MANRFTSSDQ…RDISLLGSTI (150 aa)). Positions 12–23 (QETHGHHVDKHS) are enriched in basic and acidic residues. Over residues 83-93 (NRSSQHTGRVN) the composition is skewed to polar residues.

It is found in the cytoplasm. It localises to the nucleus. In terms of biological role, has a role in meiosis. This is Meiotically up-regulated gene 108 protein (mug108) from Schizosaccharomyces pombe (strain 972 / ATCC 24843) (Fission yeast).